A 125-amino-acid chain; its full sequence is MAFPNTSAQQAETNRKILEEIQTKKQLLAGGIINLGLSNTNQMPAPQLLGQPTTTTATPDLVSTNSTPPRAAFNPTSSTTLGFFIPQDSYFGNSLIPVLPRLELPATPSTTTPPITPIANANNPK.

Disordered regions lie at residues 44–73 (PAPQ…RAAF) and 105–125 (PATP…NNPK).

It belongs to the SOSS-C family.

The chain is SOSS complex subunit C homolog B from Drosophila willistoni (Fruit fly).